We begin with the raw amino-acid sequence, 910 residues long: Auxilin (910 aa).

Tandem repeats lie at residues 33–36 (NLKD), 37–40 (NLKD), and 41–44 (TLKD). The segment at 33–44 (NLKDNLKDTLKD) is 3 X 4 AA approximate tandem repeats. In terms of domain architecture, Phosphatase tensin-type spans 52–219 (SVTSYTKGDL…GYMCDLLADK (168 aa)). At S109 the chain carries Phosphoserine. The Phosphocysteine intermediate role is filled by C161. In terms of domain architecture, C2 tensin-type spans 225-363 (FKPLTIKSIT…FQVTLDVELQ (139 aa)). An SH3-binding motif is present at residues 406–414 (PIDIPPDNP). Residues 448–772 (QESEQSDDEL…RGKAAANLEG (325 aa)) are disordered. Residues S450, S453, S560, and S567 each carry the phosphoserine modification. Positions 547-569 (PSGPTSTQSTPRRSATSTSASPT) are enriched in low complexity. Residues 596–626 (FLNTASASSDPFLQPTRSPSPTVHASSTPAV) show a composition bias toward polar residues. Residues 651–666 (SAATSPTGSSHGTPTH) show a composition bias toward low complexity. The segment covering 715-725 (MGGGWQQGGGY) has biased composition (gly residues). Residues 732 to 758 (SKPQSSMPHSSPQNRPNYNVSFSSMPG) show a composition bias toward polar residues. A J domain is found at 846–910 (TKWKPVGMAD…FENQGQKPLY (65 aa)).

As to quaternary structure, forms a complex composed of HSPA8, CLTC and DNAJC6. Interacts with HSPA8/HSC70 in an ATP-dependent manner; this interaction stimulates the HSPA8's ATPase activity. Interacts with CLTC; this interaction produces a local change in heavy-chain contacts, creating a detectable global distortion of the clathrin coat. Interacts with AP2A2. Interacts with DNM1(GTP-bound form); this interaction allows clathrin-coated vesicle (CCV) formation at the plasma membrane. The N-terminus is blocked. In terms of processing, phosphorylation at Ser-567 modulates its ability to bind CLTC and therefore the synaptic vesicle endocytosis (SVE). Brain.

It localises to the cytoplasmic vesicle. The protein resides in the clathrin-coated vesicle. May act as a protein phosphatase and/or a lipid phosphatase. Co-chaperone that recruits HSPA8/HSC70 to clathrin-coated vesicles (CCVs) and promotes the ATP-dependent dissociation of clathrin from CCVs and participates in clathrin-mediated endocytosis of synaptic vesicles and their recycling and also in intracellular trafficking. Firstly, binds tightly to the clathrin cages, at a ratio of one DNAJC6 per clathrin triskelion. The HSPA8:ATP complex then binds to the clathrin-auxilin cage, initially at a ratio of one HSPA8 per triskelion leading to ATP hydrolysis stimulation and causing a conformational change in the HSPA8. This cycle is repeated three times to drive to a complex containing the clathrin-auxilin cage associated to three HSPA8:ADP complex. The ATP hydrolysis of the third HSPA8:ATP complex leads to a concerted dismantling of the cage into component triskelia. Then, dissociates from the released triskelia and be recycled to initiate another cycle of HSPA8's recruitment. Also acts during the early steps of clathrin-coated vesicle (CCV) formation through its interaction with the GTP bound form of DNM1. This Bos taurus (Bovine) protein is Auxilin.